The chain runs to 658 residues: Glycogen debranching enzyme (658 aa).

D336 functions as the Nucleophile in the catalytic mechanism. E371 serves as the catalytic Proton donor. The segment at 459–484 (EANGEENRDGTNSNYSDNHGKEGLGG) is disordered.

The protein belongs to the glycosyl hydrolase 13 family.

It catalyses the reaction Hydrolysis of (1-&gt;6)-alpha-D-glucosidic linkages to branches with degrees of polymerization of three or four glucose residues in limit dextrin.. It functions in the pathway glycan degradation; glycogen degradation. Removes maltotriose and maltotetraose chains that are attached by 1,6-alpha-linkage to the limit dextrin main chain, generating a debranched limit dextrin. In Salmonella enteritidis PT4 (strain P125109), this protein is Glycogen debranching enzyme.